The chain runs to 525 residues: GMP synthase [glutamine-hydrolyzing] (525 aa).

Positions lysine 8–asparagine 207 constitute a Glutamine amidotransferase type-1 domain. Residue cysteine 85 is the Nucleophile of the active site. Residues histidine 181 and glutamate 183 contribute to the active site. The 193-residue stretch at tryptophan 208–arginine 400 folds into the GMPS ATP-PPase domain. Residue serine 235–serine 241 coordinates ATP.

As to quaternary structure, homodimer.

The enzyme catalyses XMP + L-glutamine + ATP + H2O = GMP + L-glutamate + AMP + diphosphate + 2 H(+). It participates in purine metabolism; GMP biosynthesis; GMP from XMP (L-Gln route): step 1/1. In terms of biological role, catalyzes the synthesis of GMP from XMP. This chain is GMP synthase [glutamine-hydrolyzing], found in Shewanella loihica (strain ATCC BAA-1088 / PV-4).